Consider the following 188-residue polypeptide: Elongation factor P (188 aa).

This sequence belongs to the elongation factor P family.

It localises to the cytoplasm. The protein operates within protein biosynthesis; polypeptide chain elongation. Functionally, involved in peptide bond synthesis. Stimulates efficient translation and peptide-bond synthesis on native or reconstituted 70S ribosomes in vitro. Probably functions indirectly by altering the affinity of the ribosome for aminoacyl-tRNA, thus increasing their reactivity as acceptors for peptidyl transferase. This Methylobacterium sp. (strain 4-46) protein is Elongation factor P.